The primary structure comprises 504 residues: Probable cytochrome P450 305a1 (504 aa).

Heme is bound at residue Cys450.

Belongs to the cytochrome P450 family. Heme serves as cofactor.

The protein localises to the endoplasmic reticulum membrane. It is found in the microsome membrane. Its function is as follows. May be involved in the metabolism of insect hormones and in the breakdown of synthetic insecticides. This Drosophila melanogaster (Fruit fly) protein is Probable cytochrome P450 305a1 (Cyp305a1).